Reading from the N-terminus, the 318-residue chain is Dehydrogenase/reductase SDR family member 7C-B (318 aa).

An N-terminal signal peptide occupies residues 1–32; the sequence is MGMSDIMWLDVSWAWLVLTAVLLAAAVFYLYT. 49 to 73 is an NAD(+) binding site; the sequence is LITDSLSTVGNECAKLFHAGGARLI. Ser186 provides a ligand contact to substrate. Tyr199 functions as the Proton acceptor in the catalytic mechanism.

Belongs to the short-chain dehydrogenases/reductases (SDR) family.

The protein resides in the secreted. Functionally, putative oxidoreductase. This Danio rerio (Zebrafish) protein is Dehydrogenase/reductase SDR family member 7C-B (dhrs7cb).